The primary structure comprises 88 residues: Small ribosomal subunit protein uS17 (88 aa).

Belongs to the universal ribosomal protein uS17 family. In terms of assembly, part of the 30S ribosomal subunit.

Functionally, one of the primary rRNA binding proteins, it binds specifically to the 5'-end of 16S ribosomal RNA. This Pseudomonas aeruginosa (strain LESB58) protein is Small ribosomal subunit protein uS17.